Here is a 162-residue protein sequence, read N- to C-terminus: 6,7-dimethyl-8-ribityllumazine synthase (162 aa).

5-amino-6-(D-ribitylamino)uracil-binding positions include Phe22, 56–58 (TFE), and 80–82 (AVI). 85–86 (GT) serves as a coordination point for (2S)-2-hydroxy-3-oxobutyl phosphate. Residue His88 is the Proton donor of the active site. Met113 serves as a coordination point for 5-amino-6-(D-ribitylamino)uracil. Arg127 lines the (2S)-2-hydroxy-3-oxobutyl phosphate pocket.

The protein belongs to the DMRL synthase family.

The enzyme catalyses (2S)-2-hydroxy-3-oxobutyl phosphate + 5-amino-6-(D-ribitylamino)uracil = 6,7-dimethyl-8-(1-D-ribityl)lumazine + phosphate + 2 H2O + H(+). Its pathway is cofactor biosynthesis; riboflavin biosynthesis; riboflavin from 2-hydroxy-3-oxobutyl phosphate and 5-amino-6-(D-ribitylamino)uracil: step 1/2. Catalyzes the formation of 6,7-dimethyl-8-ribityllumazine by condensation of 5-amino-6-(D-ribitylamino)uracil with 3,4-dihydroxy-2-butanone 4-phosphate. This is the penultimate step in the biosynthesis of riboflavin. This Anaeromyxobacter dehalogenans (strain 2CP-1 / ATCC BAA-258) protein is 6,7-dimethyl-8-ribityllumazine synthase.